The chain runs to 360 residues: Protein RecA (360 aa).

ATP is bound at residue 64–71; it reads GHESSGKT. The interval 333–360 is disordered; that stretch reads QEQVQPEPKSKQSKSKQASEQATQDELI.

Belongs to the RecA family.

Its subcellular location is the cytoplasm. Functionally, can catalyze the hydrolysis of ATP in the presence of single-stranded DNA, the ATP-dependent uptake of single-stranded DNA by duplex DNA, and the ATP-dependent hybridization of homologous single-stranded DNAs. It interacts with LexA causing its activation and leading to its autocatalytic cleavage. The polypeptide is Protein RecA (Francisella philomiragia subsp. philomiragia (strain ATCC 25017 / CCUG 19701 / FSC 153 / O#319-036)).